Consider the following 181-residue polypeptide: 6,7-dimethyl-8-ribityllumazine synthase 2 (181 aa).

Positions 1–23 (MSLPMTETVTDPAETAPPTAERS) are disordered. Residues Trp-40, 74 to 76 (SFE), 98 to 100 (LVV), and Ser-129 contribute to the 5-amino-6-(D-ribitylamino)uracil site.

The protein belongs to the DMRL synthase family.

It carries out the reaction (2S)-2-hydroxy-3-oxobutyl phosphate + 5-amino-6-(D-ribitylamino)uracil = 6,7-dimethyl-8-(1-D-ribityl)lumazine + phosphate + 2 H2O + H(+). It participates in cofactor biosynthesis; riboflavin biosynthesis; riboflavin from 2-hydroxy-3-oxobutyl phosphate and 5-amino-6-(D-ribitylamino)uracil: step 1/2. In terms of biological role, catalyzes the formation of 6,7-dimethyl-8-ribityllumazine by condensation of 5-amino-6-(D-ribitylamino)uracil with 3,4-dihydroxy-2-butanone 4-phosphate. This is the penultimate step in the biosynthesis of riboflavin. This chain is 6,7-dimethyl-8-ribityllumazine synthase 2, found in Rhodopseudomonas palustris (strain ATCC BAA-98 / CGA009).